The sequence spans 2758 residues: Highly reducing polyketide synthase NEC1 (2758 aa).

Positions 153 to 492 (EASSPIIGLD…GSNAHVVMDD (340 aa)) constitute a Ketosynthase family 3 (KS3) domain. A disordered region spans residues 512-576 (PRLPGSSSSR…NTDTLQTTDT (65 aa)). Positions 566–576 (TNTDTLQTTDT) are enriched in low complexity. The interval 700 to 1044 (VFTGQGAQWP…GYATVLKRGD (345 aa)) is malonyl-CoA:ACP transacylase (MAT) domain. The active-site For malonyltransferase activity is Ser790. Residues 1124 to 1255 (HELLGAPVPD…GFVRTEYSQT (132 aa)) form an N-terminal hotdog fold region. The tract at residues 1124 to 1442 (HELLGAPVPD…VFKTIPNTAS (319 aa)) is dehydratase (DH) domain. Positions 1124 to 1443 (HELLGAPVPD…FKTIPNTASS (320 aa)) constitute a PKS/mFAS DH domain. The Proton acceptor; for dehydratase activity role is filled by His1156. The interval 1283–1443 (TSMVHADKVY…FKTIPNTASS (161 aa)) is C-terminal hotdog fold. Asp1351 acts as the Proton donor; for dehydratase activity in catalysis. Residues 1622-1727 (LEVGGGTGGA…RKLLKPGGKL (106 aa)) are methyltransferase (CMet) domain. Positions 2031–2344 (GTADVCFSED…LGKGEDAVVL (314 aa)) are enoyl reductase (ER) domain. A ketoreductase (KR) domain region spans residues 2372-2553 (ASYMVVGGLG…PVAVSLDLPV (182 aa)). One can recognise a Carrier domain in the interval 2673–2750 (EAQAVVLDAL…ALAAAVAGRS (78 aa)). The residue at position 2710 (Ser2710) is an O-(pantetheine 4'-phosphoryl)serine.

Its function is as follows. Highly reducing polyketide synthase; part of the gene cluster that mediates the biosynthesis of nectriapyrone and its analogs phomopyrone A, acropyrone and zaepyrone. The nectriapyrone biosynthetic gene cluster consists of two genes, the highly reducing polyketide synthase NEC1 that produces a demethylated analog of nectriapyrone from one unit of acetyl-CoA and one unit of malonyl-CoA; and the O-methyltransferase NEC2 that further methylates the NEC1 product to yield nectriapyrone. Nectriapyrone is further hydrolyzed to nectriapyrone D, also known as gulypyrone B, by an unidentified hydrolase localized outside the nectriapyrone cluster. The sequence is that of Highly reducing polyketide synthase NEC1 from Pyricularia oryzae (strain 70-15 / ATCC MYA-4617 / FGSC 8958) (Rice blast fungus).